The chain runs to 633 residues: Probable sodium/potassium/calcium exchanger CG1090 (633 aa).

A signal peptide spans 1–21 (MWNMGLLFLIYYCVSIYSAKG). Topologically, residues 22-111 (DTKDGQVLPL…PLMNKWARQH (90 aa)) are extracellular. Residues 112-132 (GGLILHILVAVFTFFGLAIVC) form a helical membrane-spanning segment. Topologically, residues 133–157 (DEYFVASLDRLCEELKLSPDVAGAT) are cytoplasmic. An Alpha-1 repeat occupies 153–193 (VAGATFMAAGSSAPELATVVIGVFFAKDDIGISGVIGSAVF). A helical membrane pass occupies residues 158–178 (FMAAGSSAPELATVVIGVFFA). Over 179 to 181 (KDD) the chain is Extracellular. The helical transmembrane segment at 182–202 (IGISGVIGSAVFNIMFVISVC) threads the bilayer. The Cytoplasmic portion of the chain corresponds to 203-220 (ALCSGTVCQLNWWPLVRD). Transmembrane regions (helical) follow at residues 221-241 (CFFY…DVIS) and 242-262 (CFES…LHFN). Residues 263-427 (TELERWALGL…EPRRDPLLRP (165 aa)) are Extracellular-facing. Polar residues-rich tracts occupy residues 298–310 (YTQE…QGQK), 320–333 (AKPQ…SDPN), and 395–405 (QVVSTQATSAG). The interval 298-422 (YTQESVGQTQ…TDKQREPRRD (125 aa)) is disordered. Basic and acidic residues predominate over residues 411–422 (KSTDKQREPRRD). A helical transmembrane segment spans residues 428–448 (MEGGLPALVSWYVVYPIHFLC). The Cytoplasmic portion of the chain corresponds to 449 to 468 (KKTMPDCRQEQYRNWYPFTF). Residues 469 to 489 (LMSMVWISFYSYFMVWMITVI) form a helical membrane-spanning segment. Topologically, residues 490 to 500 (GSTLAIPDTVM) are extracellular. The chain crosses the membrane as a helical span at residues 501–521 (GLTFVAAGVSVPDALSSIAVI). The Alpha-2 repeat unit spans residues 506–537 (AAGVSVPDALSSIAVIKEGFGDMAVSNAIGSN). At 522-535 (KEGFGDMAVSNAIG) the chain is on the cytoplasmic side. A helical membrane pass occupies residues 536-556 (SNVFDILVCLGLPWFIQTAII). Residues 557-568 (KPGSHVNVISKG) lie on the Extracellular side of the membrane. Residues 569–589 (LAYSTLSLFSTVVFLILSTHL) form a helical membrane-spanning segment. At 590 to 597 (NGWKLDKR) the chain is on the cytoplasmic side. Residues 598 to 618 (LGIILMVWYLFFITLASLYEL) form a helical membrane-spanning segment. The Extracellular portion of the chain corresponds to 619 to 633 (NVFGYMNPPECPSTY).

Belongs to the Ca(2+):cation antiporter (CaCA) (TC 2.A.19) family. SLC24A subfamily.

It is found in the membrane. Functionally, may function in the removal and maintenance of calcium homeostasis. Transports one Ca(2+) and 1 K(+) in exchange for 4 Na(+). This Drosophila melanogaster (Fruit fly) protein is Probable sodium/potassium/calcium exchanger CG1090.